A 160-amino-acid polypeptide reads, in one-letter code: Phosphoribosyl-ATP pyrophosphatase (160 aa).

The protein belongs to the PRA-PH family.

The protein localises to the cytoplasm. It carries out the reaction 1-(5-phospho-beta-D-ribosyl)-ATP + H2O = 1-(5-phospho-beta-D-ribosyl)-5'-AMP + diphosphate + H(+). The protein operates within amino-acid biosynthesis; L-histidine biosynthesis; L-histidine from 5-phospho-alpha-D-ribose 1-diphosphate: step 2/9. In Granulibacter bethesdensis (strain ATCC BAA-1260 / CGDNIH1), this protein is Phosphoribosyl-ATP pyrophosphatase.